We begin with the raw amino-acid sequence, 108 residues long: Cell division protein FtsL (108 aa).

Over 1 to 24 (MSKDTASQPSLTKLIGLDIFGVGR) the chain is Cytoplasmic. A helical membrane pass occupies residues 25–45 (LHAILLICIFLSAIGVVLATH). Residues 46–108 (NTRQMTVQRE…PDKEVIIKLR (63 aa)) are Periplasmic-facing.

The protein belongs to the FtsL family. As to quaternary structure, part of a complex composed of FtsB, FtsL and FtsQ.

The protein localises to the cell inner membrane. Essential cell division protein. May link together the upstream cell division proteins, which are predominantly cytoplasmic, with the downstream cell division proteins, which are predominantly periplasmic. The sequence is that of Cell division protein FtsL from Aliivibrio fischeri (strain ATCC 700601 / ES114) (Vibrio fischeri).